The sequence spans 91 residues: Probable Fe(2+)-trafficking protein (91 aa).

This sequence belongs to the Fe(2+)-trafficking protein family.

Its function is as follows. Could be a mediator in iron transactions between iron acquisition and iron-requiring processes, such as synthesis and/or repair of Fe-S clusters in biosynthetic enzymes. This is Probable Fe(2+)-trafficking protein from Shewanella denitrificans (strain OS217 / ATCC BAA-1090 / DSM 15013).